Consider the following 210-residue polypeptide: Large ribosomal subunit protein uL3 (210 aa).

This sequence belongs to the universal ribosomal protein uL3 family. As to quaternary structure, part of the 50S ribosomal subunit. Forms a cluster with proteins L14 and L19.

One of the primary rRNA binding proteins, it binds directly near the 3'-end of the 23S rRNA, where it nucleates assembly of the 50S subunit. This is Large ribosomal subunit protein uL3 from Pediococcus pentosaceus (strain ATCC 25745 / CCUG 21536 / LMG 10740 / 183-1w).